Consider the following 317-residue polypeptide: Protein phosphatase 1 regulatory subunit 3C (317 aa).

Residues 84-87 (RVVF) carry the PP1-binding motif motif. Positions 141 to 263 (PSSDYLSFRD…YRIVHVQWKP (123 aa)) are interaction with EPM2A. In terms of domain architecture, CBM21 spans 149–257 (RDRFQKNFVC…NNEAQNYRIV (109 aa)).

As to quaternary structure, interacts with PPP1CC catalytic subunit of PP1 and associates with glycogen. Forms complexes with glycogen phosphorylase, glycogen synthase and phosphorylase kinase which is necessary for its regulation of PP1 activity. Also interacts with EPM2A/laforin. Ubiquitinated by NHLRC1/malin in a EPM2A/laforin-dependent manner.

Functionally, acts as a glycogen-targeting subunit for PP1 and regulates its activity. Activates glycogen synthase, reduces glycogen phosphorylase activity and limits glycogen breakdown. Dramatically increases basal and insulin-stimulated glycogen synthesis upon overexpression in a variety of cell types. The sequence is that of Protein phosphatase 1 regulatory subunit 3C from Rattus norvegicus (Rat).